The primary structure comprises 184 residues: Endoribonuclease YbeY (184 aa).

Acidic residues-rich tracts occupy residues 1 to 11 and 19 to 29; these read MTVEVGADENP and DGAGDESDDED. Positions 1 to 38 are disordered; that stretch reads MTVEVGADENPDFAHDETDGAGDESDDEDAQGRDPELD. Positions 146, 150, and 156 each coordinate Zn(2+).

This sequence belongs to the endoribonuclease YbeY family. Requires Zn(2+) as cofactor.

The protein localises to the cytoplasm. Functionally, single strand-specific metallo-endoribonuclease involved in late-stage 70S ribosome quality control and in maturation of the 3' terminus of the 16S rRNA. The sequence is that of Endoribonuclease YbeY from Burkholderia pseudomallei (strain K96243).